The primary structure comprises 501 residues: NAD(P)H-quinone oxidoreductase chain 4, chloroplastic (501 aa).

Transmembrane regions (helical) follow at residues 4 to 24 (FPWLTIIVVLPISAGSLILFL), 35 to 55 (YTICICILELLITTYAFCYHF), 84 to 104 (GLSIGPILLTGFITTLATLAA), 111 to 129 (SRLLHLLMLAMYSGQIGSF), 134 to 154 (LLLFFIMWELELIPVYLLLSM), 168 to 188 (FILYTAGGSIFLLMGVLGMDL), 209 to 229 (ALEILFYFGFIIAFAVKSPII), 243 to 263 (HYSTCMLLAGILLKMGAYGLI), 273 to 293 (AHSIFSPWLVIVGTMQIIYAA), 306 to 326 (IAYSSVSHMGFIIIGIGSITD), 331 to 351 (GAILQIISHGFIGAALFFLAG), 387 to 407 (LALPGMSGFVAELIVFFGIIT), 417 to 437 (ILITFVMAIGMILTPIYSLSM), and 463 to 483 (LFVSISIFLPVIGIGIYPDFV).

It belongs to the complex I subunit 4 family.

It localises to the plastid. The protein localises to the chloroplast thylakoid membrane. It carries out the reaction a plastoquinone + NADH + (n+1) H(+)(in) = a plastoquinol + NAD(+) + n H(+)(out). The catalysed reaction is a plastoquinone + NADPH + (n+1) H(+)(in) = a plastoquinol + NADP(+) + n H(+)(out). This chain is NAD(P)H-quinone oxidoreductase chain 4, chloroplastic, found in Buxus microphylla (Littleleaf boxwood).